Here is a 62-residue protein sequence, read N- to C-terminus: Large ribosomal subunit protein eL24 (62 aa).

Residues Cys6, Cys9, Cys32, and Cys36 each coordinate Zn(2+). A C4-type zinc finger spans residues 6-36; sequence CYFCGQMLEPGTGKLYIKKDGSTYFMCSSKC.

Belongs to the eukaryotic ribosomal protein eL24 family. Part of the 50S ribosomal subunit. Forms a cluster with proteins L3 and L14. The cofactor is Zn(2+).

In terms of biological role, binds to the 23S rRNA. In Methanosarcina mazei (strain ATCC BAA-159 / DSM 3647 / Goe1 / Go1 / JCM 11833 / OCM 88) (Methanosarcina frisia), this protein is Large ribosomal subunit protein eL24.